Consider the following 256-residue polypeptide: UPF0246 protein SPO0106 (256 aa).

Belongs to the UPF0246 family.

The protein is UPF0246 protein SPO0106 of Ruegeria pomeroyi (strain ATCC 700808 / DSM 15171 / DSS-3) (Silicibacter pomeroyi).